We begin with the raw amino-acid sequence, 695 residues long: DNA ligase (695 aa).

NAD(+) contacts are provided by residues 44–48 (DAEYD), 93–94 (SL), and Glu-124. The active-site N6-AMP-lysine intermediate is Lys-126. 4 residues coordinate NAD(+): Arg-147, Glu-187, Lys-304, and Lys-328. Zn(2+)-binding residues include Cys-422, Cys-425, Cys-440, and Cys-445. Residues 606-695 (TVQGPLAGKT…GIEVEAAARS (90 aa)) form the BRCT domain.

Belongs to the NAD-dependent DNA ligase family. LigA subfamily. Requires Mg(2+) as cofactor. Mn(2+) is required as a cofactor.

The enzyme catalyses NAD(+) + (deoxyribonucleotide)n-3'-hydroxyl + 5'-phospho-(deoxyribonucleotide)m = (deoxyribonucleotide)n+m + AMP + beta-nicotinamide D-nucleotide.. Functionally, DNA ligase that catalyzes the formation of phosphodiester linkages between 5'-phosphoryl and 3'-hydroxyl groups in double-stranded DNA using NAD as a coenzyme and as the energy source for the reaction. It is essential for DNA replication and repair of damaged DNA. The sequence is that of DNA ligase from Thermomicrobium roseum (strain ATCC 27502 / DSM 5159 / P-2).